A 56-amino-acid polypeptide reads, in one-letter code: Large ribosomal subunit protein bL32c (56 aa).

This sequence belongs to the bacterial ribosomal protein bL32 family.

It localises to the plastid. The protein localises to the chloroplast. In Platanus occidentalis (Sycamore), this protein is Large ribosomal subunit protein bL32c.